The following is a 274-amino-acid chain: Dermonecrotic toxin SdSicTox-betaIIB1bvii (274 aa).

Residue histidine 5 is part of the active site. Mg(2+)-binding residues include glutamate 25 and aspartate 27. Histidine 41 functions as the Nucleophile in the catalytic mechanism. 2 disulfides stabilise this stretch: cysteine 45–cysteine 51 and cysteine 47–cysteine 190. Aspartate 85 serves as a coordination point for Mg(2+).

It belongs to the arthropod phospholipase D family. Class II subfamily. The cofactor is Mg(2+). Expressed by the venom gland.

It is found in the secreted. The catalysed reaction is an N-(acyl)-sphingosylphosphocholine = an N-(acyl)-sphingosyl-1,3-cyclic phosphate + choline. It carries out the reaction an N-(acyl)-sphingosylphosphoethanolamine = an N-(acyl)-sphingosyl-1,3-cyclic phosphate + ethanolamine. The enzyme catalyses a 1-acyl-sn-glycero-3-phosphocholine = a 1-acyl-sn-glycero-2,3-cyclic phosphate + choline. It catalyses the reaction a 1-acyl-sn-glycero-3-phosphoethanolamine = a 1-acyl-sn-glycero-2,3-cyclic phosphate + ethanolamine. Its function is as follows. Dermonecrotic toxins cleave the phosphodiester linkage between the phosphate and headgroup of certain phospholipids (sphingolipid and lysolipid substrates), forming an alcohol (often choline) and a cyclic phosphate. This toxin acts on sphingomyelin (SM). It may also act on ceramide phosphoethanolamine (CPE), lysophosphatidylcholine (LPC) and lysophosphatidylethanolamine (LPE), but not on lysophosphatidylserine (LPS), and lysophosphatidylglycerol (LPG). It acts by transphosphatidylation, releasing exclusively cyclic phosphate products as second products. Induces dermonecrosis, hemolysis, increased vascular permeability, edema, inflammatory response, and platelet aggregation. The polypeptide is Dermonecrotic toxin SdSicTox-betaIIB1bvii (Sicarius cf. damarensis (strain GJB-2008) (Six-eyed sand spider)).